We begin with the raw amino-acid sequence, 538 residues long: Putative cysteine ligase BshC (538 aa).

Residues 248–268 are a coiled coil; it reads ISKYKEVQEGLRNQQEVIKEL.

It belongs to the BshC family.

Functionally, involved in bacillithiol (BSH) biosynthesis. May catalyze the last step of the pathway, the addition of cysteine to glucosamine malate (GlcN-Mal) to generate BSH. The polypeptide is Putative cysteine ligase BshC (Bacillus cereus (strain ATCC 14579 / DSM 31 / CCUG 7414 / JCM 2152 / NBRC 15305 / NCIMB 9373 / NCTC 2599 / NRRL B-3711)).